The following is a 33-amino-acid chain: Phospholipase A2 homolog BmarPLA2 (33 aa).

The protein belongs to the phospholipase A2 family. Group II subfamily. K49 sub-subfamily. Homodimer; non-covalently linked. As to expression, expressed by the venom gland.

It is found in the secreted. Its function is as follows. Snake phospholipase A2 homolog that lacks enzymatic activity. May display myotoxin activity. In isolated heart decreases cardiac frequency. Also decreases mean arterial pressure. Does not show antimicrobial activity. Does not change renal parameters (such as perfusion pressure, renal vascular resistance, urinary flow, glomerular filtration rate and sodium tubular transport). This chain is Phospholipase A2 homolog BmarPLA2, found in Bothrops marajoensis (Marajo lancehead).